Consider the following 57-residue polypeptide: UPF0391 membrane protein RPD_3366 (57 aa).

A run of 2 helical transmembrane segments spans residues 4-24 (WVVT…GGIA) and 30-50 (IAKV…VVGL).

Belongs to the UPF0391 family.

Its subcellular location is the cell membrane. This chain is UPF0391 membrane protein RPD_3366, found in Rhodopseudomonas palustris (strain BisB5).